Reading from the N-terminus, the 330-residue chain is DNA-directed RNA polymerase subunit alpha (330 aa).

Residues M1–K237 form an alpha N-terminal domain (alpha-NTD) region. Residues F251–E330 form an alpha C-terminal domain (alpha-CTD) region.

The protein belongs to the RNA polymerase alpha chain family. Homodimer. The RNAP catalytic core consists of 2 alpha, 1 beta, 1 beta' and 1 omega subunit. When a sigma factor is associated with the core the holoenzyme is formed, which can initiate transcription.

The enzyme catalyses RNA(n) + a ribonucleoside 5'-triphosphate = RNA(n+1) + diphosphate. DNA-dependent RNA polymerase catalyzes the transcription of DNA into RNA using the four ribonucleoside triphosphates as substrates. The chain is DNA-directed RNA polymerase subunit alpha from Legionella pneumophila (strain Paris).